The sequence spans 253 residues: Adapter protein MecA (253 aa).

Belongs to the MecA family. In terms of assembly, homodimer.

In terms of biological role, enables the recognition and targeting of unfolded and aggregated proteins to the ClpC protease or to other proteins involved in proteolysis. The polypeptide is Adapter protein MecA (Streptococcus pyogenes serotype M18 (strain MGAS8232)).